A 316-amino-acid polypeptide reads, in one-letter code: Ribosomal RNA small subunit methyltransferase H (316 aa).

S-adenosyl-L-methionine-binding positions include 35–37, Asp-55, Phe-84, Asp-105, and Gln-112; that span reads AGH.

It belongs to the methyltransferase superfamily. RsmH family.

The protein localises to the cytoplasm. It catalyses the reaction cytidine(1402) in 16S rRNA + S-adenosyl-L-methionine = N(4)-methylcytidine(1402) in 16S rRNA + S-adenosyl-L-homocysteine + H(+). In terms of biological role, specifically methylates the N4 position of cytidine in position 1402 (C1402) of 16S rRNA. This is Ribosomal RNA small subunit methyltransferase H from Streptococcus pneumoniae serotype 4 (strain ATCC BAA-334 / TIGR4).